A 517-amino-acid polypeptide reads, in one-letter code: RNA-binding region-containing protein 3 (517 aa).

The disordered stretch occupies residues Met-1–Asp-26. Ser-21 carries the post-translational modification Phosphoserine. Positions Arg-27–Glu-102 constitute an RRM 1 domain. Disordered regions lie at residues Val-106–Glu-130 and Met-213–Arg-254. Residue Ser-108 is modified to Phosphoserine. Residues Ser-115–Glu-130 are compositionally biased toward basic and acidic residues. Pro residues predominate over residues Ala-217–Pro-230. The segment covering Pro-231 to Glu-252 has biased composition (acidic residues). Positions Cys-420–Ser-503 constitute an RRM 2 domain.

In terms of assembly, component of the U11/U12 snRNPs that are part of the U12-type spliceosome. Found in a complex with m(7)G-capped U12 snRNA. Interacts with PDCD7.

It is found in the nucleus. In terms of biological role, participates in pre-mRNA U12-dependent splicing, performed by the minor spliceosome which removes U12-type introns. U12-type introns comprises less than 1% of all non-coding sequences. Binds to the 3'-stem-loop of m(7)G-capped U12 snRNA. The chain is RNA-binding region-containing protein 3 (RNPC3) from Pongo abelii (Sumatran orangutan).